A 361-amino-acid chain; its full sequence is Probable G-protein coupled receptor 25 (361 aa).

The Extracellular portion of the chain corresponds to M1–Y39. Residues V40 to V60 form a helical membrane-spanning segment. Residues V61–D75 are Cytoplasmic-facing. Residues T76 to A96 form a helical membrane-spanning segment. The Extracellular portion of the chain corresponds to A97–G126. Residues A127 to A147 form a helical membrane-spanning segment. Over R148–C155 the chain is Cytoplasmic. A helical transmembrane segment spans residues A156 to V176. At Y177–Q200 the chain is on the extracellular side. A helical transmembrane segment spans residues G201–F220. The Cytoplasmic portion of the chain corresponds to C221–S242. Residues L243–L263 traverse the membrane as a helical segment. At R264–L289 the chain is on the extracellular side. The chain crosses the membrane as a helical span at residues T290–L310. At D311 to W361 the chain is on the cytoplasmic side.

This sequence belongs to the G-protein coupled receptor 1 family.

It is found in the cell membrane. Its function is as follows. Orphan receptor. In Homo sapiens (Human), this protein is Probable G-protein coupled receptor 25 (GPR25).